The primary structure comprises 128 residues: uncharacterized protein (128 aa).

The next 2 helical transmembrane spans lie at 52 to 72 and 91 to 111; these read LLVI…GIFL and LFVA…VMLI.

The protein resides in the cell membrane. This is an uncharacterized protein from Mycoplasma pneumoniae (strain ATCC 29342 / M129 / Subtype 1) (Mycoplasmoides pneumoniae).